Consider the following 362-residue polypeptide: Aminomethyltransferase (362 aa).

It belongs to the GcvT family. As to quaternary structure, the glycine cleavage system is composed of four proteins: P, T, L and H.

The enzyme catalyses N(6)-[(R)-S(8)-aminomethyldihydrolipoyl]-L-lysyl-[protein] + (6S)-5,6,7,8-tetrahydrofolate = N(6)-[(R)-dihydrolipoyl]-L-lysyl-[protein] + (6R)-5,10-methylene-5,6,7,8-tetrahydrofolate + NH4(+). The glycine cleavage system catalyzes the degradation of glycine. This Chloroherpeton thalassium (strain ATCC 35110 / GB-78) protein is Aminomethyltransferase.